The primary structure comprises 203 residues: MRRRRGIVGIEAAIVLIAFVIVAAALAFVALNMGLFTTQKSKEVMQRGLEEATSALEVDGSVIANVTSGSVDAIAIPIKVSPGREGVDMSVDKTTVRVMLPSKFYENAYCGVFDGSSLSDSKLSTITSSIACTTGWAYLVIFNGDGDNVLELGEKGLLVLELPTPLNSYEEFKVEVRPVQGAALTVERIVPASLPTGGAVSLG.

The propeptide occupies Met1–Gly6.

The protein belongs to the archaeal flagellin family.

The protein resides in the archaeal flagellum. Flagellin is the subunit protein which polymerizes to form the filaments of archaeal flagella. This is Probable flagellin 1 (flaB1) from Aeropyrum pernix (strain ATCC 700893 / DSM 11879 / JCM 9820 / NBRC 100138 / K1).